Reading from the N-terminus, the 285-residue chain is Pantothenate synthetase (285 aa).

Methionine 30–histidine 37 is an ATP binding site. Histidine 37 serves as the catalytic Proton donor. Glutamine 61 is a (R)-pantoate binding site. Residue glutamine 61 coordinates beta-alanine. Glycine 149–aspartate 152 is a binding site for ATP. Glutamine 155 contributes to the (R)-pantoate binding site. ATP-binding positions include isoleucine 178 and leucine 186–arginine 189.

Belongs to the pantothenate synthetase family. In terms of assembly, homodimer.

The protein resides in the cytoplasm. It carries out the reaction (R)-pantoate + beta-alanine + ATP = (R)-pantothenate + AMP + diphosphate + H(+). The protein operates within cofactor biosynthesis; (R)-pantothenate biosynthesis; (R)-pantothenate from (R)-pantoate and beta-alanine: step 1/1. In terms of biological role, catalyzes the condensation of pantoate with beta-alanine in an ATP-dependent reaction via a pantoyl-adenylate intermediate. This chain is Pantothenate synthetase, found in Buchnera aphidicola subsp. Acyrthosiphon pisum (strain Tuc7).